A 378-amino-acid polypeptide reads, in one-letter code: Erythronate-4-phosphate dehydrogenase (378 aa).

The substrate site is built by S45 and T67. D147 contributes to the NAD(+) binding site. R209 is a catalytic residue. Residue D233 coordinates NAD(+). Residue E238 is part of the active site. Residue H255 is the Proton donor of the active site. Residue G258 coordinates NAD(+). Residue Y259 coordinates substrate.

Belongs to the D-isomer specific 2-hydroxyacid dehydrogenase family. PdxB subfamily. As to quaternary structure, homodimer.

It localises to the cytoplasm. It carries out the reaction 4-phospho-D-erythronate + NAD(+) = (R)-3-hydroxy-2-oxo-4-phosphooxybutanoate + NADH + H(+). The protein operates within cofactor biosynthesis; pyridoxine 5'-phosphate biosynthesis; pyridoxine 5'-phosphate from D-erythrose 4-phosphate: step 2/5. Its function is as follows. Catalyzes the oxidation of erythronate-4-phosphate to 3-hydroxy-2-oxo-4-phosphonooxybutanoate. The polypeptide is Erythronate-4-phosphate dehydrogenase (Shewanella denitrificans (strain OS217 / ATCC BAA-1090 / DSM 15013)).